Consider the following 210-residue polypeptide: CLAVATA3/ESR (CLE)-related protein 4A-3 (210 aa).

A signal peptide spans 1 to 21 (MAKNAMLCLLILRVVLALAFA). Positions 21–83 (ATNKKGDEEP…SNQLPNNNWM (63 aa)) are required for secretion from the host cytoplasm to the host apoplasm. N-linked (GlcNAc...) asparagine glycosylation occurs at asparagine 32. Residues 116–210 (RKTGMHSQRH…APAGPDPIHH (95 aa)) form a disordered region. Composition is skewed to basic and acidic residues over residues 125 to 137 (HHEETTLEQEKRV) and 144 to 200 (PIHH…EKRG). One copy of the A-1 repeat lies at 127-135 (EETTLEQEK). The 4 X approximate repeat A stretch occupies residues 127 to 198 (EETTLEQEKR…HEDTTLEQEK (72 aa)). The stretch at 136 to 147 (RVAGAGPDPIHH) is one CLE-1 repeat. The segment at 136–210 (RVAGAGPDPI…APAGPDPIHH (75 aa)) is 4 X approximate repeat CLE. The A-2 repeat unit spans residues 148–156 (QDTTLEQEK). One copy of the CLE-2 repeat lies at 157 to 168 (RAVPAGPDPKHH). One copy of the A-3 repeat lies at 169 to 177 (EETTLEQEK). Residues 178–189 (RAVPAGPDPKHH) form a CLE-3 repeat. One copy of the A-4 repeat lies at 190-198 (EDTTLEQEK). The stretch at 199 to 210 (RGAPAGPDPIHH) is one CLE-4 repeat.

The protein belongs to the CLV3/ESR signal peptide family. In terms of tissue distribution, highly expressed exclusively within the dorsal esophageal gland cell during syncytium formation in host plants.

The protein localises to the secreted. Its subcellular location is the host cytoplasm. It is found in the host extracellular space. The protein resides in the extracellular space. It localises to the apoplast. Mimics host plant CLE extracellular signal peptides that regulate cell fate. May play a role in the differentiation or division of feeding cells (syncytia) induced in plant roots during infection. The sequence is that of CLAVATA3/ESR (CLE)-related protein 4A-3 (CLE-4A-3) from Globodera rostochiensis (Golden nematode worm).